We begin with the raw amino-acid sequence, 354 residues long: Myosin-binding protein H-like (354 aa).

Residues 1 to 47 are disordered; that stretch reads MEAATAPEVAAGSKLKVKEASPADAEPPQASPGQGAGSPTPQLLPPI. Serine 38 carries the post-translational modification Phosphoserine. The Ig-like C2-type 1 domain occupies 45-139; sequence PPIEEHPKIW…GGLEATATID (95 aa). One can recognise a Fibronectin type-III domain in the interval 148–238; that stretch reads PPQSIKLVDV…ETAPITTDLA (91 aa). Residues 261-345 enclose the Ig-like C2-type 2 domain; the sequence is PKFTQPLADC…VNPLGEASVD (85 aa). A disulfide bond links cysteine 282 and cysteine 333. Arginine 321 is modified (omega-N-methylarginine).

This sequence belongs to the immunoglobulin superfamily. MyBP family. As to expression, expressed in heart, with higher expression in the atria. In terms of tissue distribution, expressed in left atrium and ventricle, arteria mammaria interna and skeletal muscle. Expressed specifically en the left atrium.

Its subcellular location is the cytoplasm. The protein localises to the myofibril. It is found in the sarcomere. Functionally, myosin-binding protein which plays a role in cardiac function. Seems to regulate conduction in the atria and ventricular conduction systems. The protein is Myosin-binding protein H-like of Homo sapiens (Human).